A 162-amino-acid chain; its full sequence is Phospholipase A and acyltransferase 3 (162 aa).

The Cytoplasmic portion of the chain corresponds to 1 to 133 (MRAPIPEPKP…VARSDQVRDV (133 aa)). An LRAT domain is found at 13–129 (LIEIFRPFYR…LRYGVARSDQ (117 aa)). Active-site residues include H23 and H35. The active-site Acyl-thioester intermediate is the C113. The chain crosses the membrane as a helical span at residues 134–154 (IIAASAAGMGLAAMSLIGVMF). The Lumenal segment spans residues 155–162 (SRNKRQKQ).

The protein belongs to the H-rev107 family. Interacts with PPP2R1A; this interaction might decrease PP2A activity.

It is found in the cell membrane. The protein localises to the cytoplasm. Its subcellular location is the cytosol. The protein resides in the perinuclear region. It localises to the peroxisome membrane. It is found in the mitochondrion membrane. The protein localises to the nucleus envelope. Its subcellular location is the lysosome membrane. The protein resides in the endoplasmic reticulum membrane. It carries out the reaction a 1,2-diacyl-sn-glycero-3-phosphocholine + H2O = a 1-acyl-sn-glycero-3-phosphocholine + a fatty acid + H(+). It catalyses the reaction a 1,2-diacyl-sn-glycero-3-phosphocholine + H2O = a 2-acyl-sn-glycero-3-phosphocholine + a fatty acid + H(+). The enzyme catalyses 1,2-dihexadecanoyl-sn-glycero-3-phosphocholine + H2O = 1-hexadecanoyl-sn-glycero-3-phosphocholine + hexadecanoate + H(+). The catalysed reaction is 1,2-dihexadecanoyl-sn-glycero-3-phosphocholine + H2O = 2-hexadecanoyl-sn-glycero-3-phosphocholine + hexadecanoate + H(+). It carries out the reaction 1-hexadecanoyl-2-(9Z-octadecenoyl)-sn-glycero-3-phosphocholine + H2O = 2-(9Z-octadecenoyl)-sn-glycero-3-phosphocholine + hexadecanoate + H(+). It catalyses the reaction 1-hexadecanoyl-2-(9Z-octadecenoyl)-sn-glycero-3-phosphocholine + H2O = 1-hexadecanoyl-sn-glycero-3-phosphocholine + (9Z)-octadecenoate + H(+). The enzyme catalyses 1-hexadecanoyl-2-(5Z,8Z,11Z,14Z-eicosatetraenoyl)-sn-glycero-3-phosphocholine + H2O = 1-hexadecanoyl-sn-glycero-3-phosphocholine + (5Z,8Z,11Z,14Z)-eicosatetraenoate + H(+). The catalysed reaction is 1-hexadecanoyl-2-(5Z,8Z,11Z,14Z-eicosatetraenoyl)-sn-glycero-3-phosphocholine + H2O = 2-(5Z,8Z,11Z,14Z)-eicosatetraenoyl-sn-glycero-3-phosphocholine + hexadecanoate + H(+). It carries out the reaction 1-hexadecanoyl-2-(9Z,12Z-octadecadienoyl)-sn-glycero-3-phosphoethanolamine + H2O = 1-hexadecanoyl-sn-glycero-3-phosphoethanolamine + (9Z,12Z)-octadecadienoate + H(+). It catalyses the reaction 1-hexadecanoyl-2-(9Z,12Z-octadecadienoyl)-sn-glycero-3-phosphoethanolamine + H2O = 2-(9Z,12Z)-octadecadienoyl-sn-glycero-3-phosphoethanolamine + hexadecanoate + H(+). The enzyme catalyses 1-hexadecanoyl-2-(5Z,8Z,11Z,14Z-eicosatetraenoyl)-sn-glycero-3-phosphoethanolamine + H2O = 1-hexadecanoyl-sn-glycero-3-phosphoethanolamine + (5Z,8Z,11Z,14Z)-eicosatetraenoate + H(+). The catalysed reaction is 1-hexadecanoyl-2-(5Z,8Z,11Z,14Z-eicosatetraenoyl)-sn-glycero-3-phosphoethanolamine + H2O = 2-(5Z,8Z,11Z,14Z)-eicosatetraenoyl-sn-glycero-3-phosphoethanolamine + hexadecanoate + H(+). It carries out the reaction 1-hexanoyl-2-acyl-sn-glycero-3-phosphocholine + H2O = hexanoate + a 2-acyl-sn-glycero-3-phosphocholine + H(+). It catalyses the reaction 1-hexanoyl-2-acyl-sn-glycero-3-phosphocholine + H2O = 1-hexanoyl-sn-glycero-3-phosphocholine + a fatty acid + H(+). The enzyme catalyses 1,2-diheptadecanoyl-sn-glycero-3-phosphoethanolamine + 1-(9Z-octadecenoyl)-2-hexadecanoyl-sn-glycero-3-phosphocholine = 1,2-diheptadecanoyl-sn-glycero-3-phospho-N-hexadecanoyl-ethanolamine + 1-(9Z-octadecenoyl)-sn-glycero-3-phosphocholine + H(+). The catalysed reaction is 1,2-diheptadecanoyl-sn-glycero-3-phosphoethanolamine + 1-(9Z-octadecenoyl)-2-hexadecanoyl-sn-glycero-3-phosphocholine = 1,2-diheptadecanoyl-sn-glycero-3-phospho-N-(9Z-octadecenoyl)-ethanolamine + 2-hexadecanoyl-sn-glycero-3-phosphocholine + H(+). It carries out the reaction 1,2-dihexanoyl-sn-glycero-3-phosphoethanolamine + 2-heptanoyl-sn-glycero-3-phosphocholine = hexanoyl-sn-glycero-3-phosphoethanolamine + 1-hexanoyl-2-heptanoyl-sn-glycero-3-phosphocholine. It catalyses the reaction 1-hexadecanoyl-2-octadecanoyl-sn-glycero-3-phosphocholine + H2O = octadecanoate + 1-hexadecanoyl-sn-glycero-3-phosphocholine + H(+). The enzyme catalyses 1-hexadecanoyl-2-octadecanoyl-sn-glycero-3-phosphocholine + H2O = 2-octadecanoyl-sn-glycero-3-phosphocholine + hexadecanoate + H(+). The catalysed reaction is 1-octadecanoyl-2-hexadecanoyl-sn-glycero-3-phosphocholine + H2O = 1-octadecanoyl-sn-glycero-3-phosphocholine + hexadecanoate + H(+). It carries out the reaction 1-octadecanoyl-2-hexadecanoyl-sn-glycero-3-phosphocholine + H2O = 2-hexadecanoyl-sn-glycero-3-phosphocholine + octadecanoate + H(+). It catalyses the reaction 1-hexadecanoyl-2-(9Z,12Z-octadecadienoyl)-sn-glycero-3-phosphocholine + H2O = (9Z,12Z)-octadecadienoate + 1-hexadecanoyl-sn-glycero-3-phosphocholine + H(+). The enzyme catalyses 1-hexadecanoyl-2-(9Z,12Z-octadecadienoyl)-sn-glycero-3-phosphocholine + H2O = 2-(9Z,12Z-octadecadienoyl)-sn-glycero-3-phosphocholine + hexadecanoate + H(+). The catalysed reaction is 1,2-di-(9Z-octadecenoyl)-sn-glycero-3-phosphocholine + H2O = 2-(9Z-octadecenoyl)-sn-glycero-3-phosphocholine + (9Z)-octadecenoate + H(+). It carries out the reaction 1,2-dihexadecanoyl-sn-glycero-3-phosphocholine + H2O = hexadecanoyl-sn-glycero-3-phosphocholine + hexadecanoate + H(+). It catalyses the reaction 1,2-di-(9Z-octadecenoyl)-sn-glycero-3-phosphocholine + H2O = 1-(9Z-octadecenoyl)-sn-glycero-3-phosphocholine + (9Z)-octadecenoate + H(+). The enzyme catalyses 1,2-di-(9Z-octadecenoyl)-sn-glycero-3-phosphoethanolamine + 1,2-dihexadecanoyl-sn-glycero-3-phosphocholine = hexadecanoyl-sn-glycero-3-phosphocholine + N-hexadecanoyl-1,2-di-(9Z-octadecenoyl)-sn-glycero-3-phosphoethanolamine + H(+). The catalysed reaction is 1,2-di-(9Z,12Z-octadecadienoyl)-sn-glycero-3-phosphocholine + H2O = 1-(9Z,12Z)-octadecadienoyl-sn-glycero-3-phosphocholine + (9Z,12Z)-octadecadienoate + H(+). Functionally, exhibits both phospholipase A1/2 and acyltransferase activities. Shows phospholipase A1 (PLA1) and A2 (PLA2), catalyzing the calcium-independent release of fatty acids from the sn-1 or sn-2 position of glycerophospholipids. For most substrates, PLA1 activity is much higher than PLA2 activity. Shows O-acyltransferase activity, catalyzing the transfer of a fatty acyl group from glycerophospholipid to the hydroxyl group of lysophospholipid. Shows N-acyltransferase activity, catalyzing the calcium-independent transfer of a fatty acyl group at the sn-1 position of phosphatidylcholine (PC) and other glycerophospholipids to the primary amine of phosphatidylethanolamine (PE), forming N-acylphosphatidylethanolamine (NAPE), which serves as precursor for N-acylethanolamines (NAEs). Exhibits high N-acyltransferase activity and low phospholipase A1/2 activity. Required for complete organelle rupture and degradation that occur during eye lens terminal differentiation, when fiber cells that compose the lens degrade all membrane-bound organelles in order to provide lens with transparency to allow the passage of light. Organelle membrane degradation is probably catalyzed by the phospholipase activity. Plays a role in phospholipid metabolism and adipogenesis. The sequence is that of Phospholipase A and acyltransferase 3 from Pongo abelii (Sumatran orangutan).